Here is a 272-residue protein sequence, read N- to C-terminus: MSTQSKGRKITTSVIRGMKKKGEKITMLTAYDYAMASLLDEVGVEMLLVGDSLGMVVLGYESTLPVTMNDMLHHTRAVSRGANNAMVVADLPFMSYQCSVEEAVRNAGRFLQEAGAHAVKLEGGREIAESVKRMTVSGIPVVGHLGLTPQSVQQFGGFKVQGKGDAAAQRIMEDAKIIEEAGAFSVVLECVPAPLAQRITDDLAIPTIGIGAGAGCDGQVLVVNDMLGIYERFTPKFVKKYANLSDNIRGAVKQYIEEVKNGTFPDQDHSFL.

Residues Asp-51 and Asp-90 each contribute to the Mg(2+) site. 3-methyl-2-oxobutanoate-binding positions include 51–52, Asp-90, and Lys-120; that span reads DS. A Mg(2+)-binding site is contributed by Glu-122. The active-site Proton acceptor is the Glu-189.

This sequence belongs to the PanB family. In terms of assembly, homodecamer; pentamer of dimers. Mg(2+) is required as a cofactor.

The protein localises to the cytoplasm. It carries out the reaction 3-methyl-2-oxobutanoate + (6R)-5,10-methylene-5,6,7,8-tetrahydrofolate + H2O = 2-dehydropantoate + (6S)-5,6,7,8-tetrahydrofolate. Its pathway is cofactor biosynthesis; (R)-pantothenate biosynthesis; (R)-pantoate from 3-methyl-2-oxobutanoate: step 1/2. Functionally, catalyzes the reversible reaction in which hydroxymethyl group from 5,10-methylenetetrahydrofolate is transferred onto alpha-ketoisovalerate to form ketopantoate. The chain is 3-methyl-2-oxobutanoate hydroxymethyltransferase from Syntrophus aciditrophicus (strain SB).